The sequence spans 344 residues: Nicotinate-nucleotide--dimethylbenzimidazole phosphoribosyltransferase (344 aa).

The active-site Proton acceptor is Glu310.

This sequence belongs to the CobT family.

The catalysed reaction is 5,6-dimethylbenzimidazole + nicotinate beta-D-ribonucleotide = alpha-ribazole 5'-phosphate + nicotinate + H(+). It functions in the pathway nucleoside biosynthesis; alpha-ribazole biosynthesis; alpha-ribazole from 5,6-dimethylbenzimidazole: step 1/2. Its function is as follows. Catalyzes the synthesis of alpha-ribazole-5'-phosphate from nicotinate mononucleotide (NAMN) and 5,6-dimethylbenzimidazole (DMB). The chain is Nicotinate-nucleotide--dimethylbenzimidazole phosphoribosyltransferase from Chromobacterium violaceum (strain ATCC 12472 / DSM 30191 / JCM 1249 / CCUG 213 / NBRC 12614 / NCIMB 9131 / NCTC 9757 / MK).